The primary structure comprises 354 residues: Lariat debranching enzyme (354 aa).

Cysteine 14, histidine 16, and aspartate 45 together coordinate a divalent metal cation. 5 residues coordinate RNA: lysine 59, asparagine 90, histidine 91, lysine 134, and histidine 156. Asparagine 90 serves as a coordination point for a divalent metal cation. A lariat recognition loop region spans residues serine 130–arginine 158. Histidine 180 is a binding site for a divalent metal cation. Glycine 201, aspartate 205, histidine 230, methionine 231, and histidine 232 together coordinate RNA. Histidine 230 is an a divalent metal cation binding site. A divalent metal cation is bound at residue histidine 232.

The protein belongs to the lariat debranching enzyme family. It depends on Fe(2+) as a cofactor. Zn(2+) serves as cofactor. Mn(2+) is required as a cofactor.

It is found in the cytoplasm. It localises to the perinuclear region. Active in presence of diverse metals including Fe(2+), Zn(2+) and Mn(2+). Binds two metal cations in two adjacent alpha and beta metal-binding pockets. The activity is the highest with Fe(2+) bound to the 2 metal-binding sites. The activity is slightly lower with Fe(2+) bound to the beta site and Zn(2+) to the alpha site and decreases further when only Zn(2+) is bound. No activity with Mn(2+). However, another study showed activity with Mn(2+) bound to the beta site and Zn(2+) to the alpha site. Mn(2+) appears unable to bind to the alpha site. In terms of biological role, cleaves the 2'-5' phosphodiester linkage at the branch point of excised lariat intron RNA and converts them into linear molecules that can be subsequently degraded, thereby facilitating ribonucleotide turnover. This is Lariat debranching enzyme from Entamoeba histolytica (strain ATCC 30459 / HM-1:IMSS / ABRM).